The following is a 123-amino-acid chain: Small ribosomal subunit protein uS12 (123 aa).

Residues M1–S47 form a disordered region. A 3-methylthioaspartic acid modification is found at D89.

It belongs to the universal ribosomal protein uS12 family. In terms of assembly, part of the 30S ribosomal subunit. Contacts proteins S8 and S17. May interact with IF1 in the 30S initiation complex.

Functionally, with S4 and S5 plays an important role in translational accuracy. Interacts with and stabilizes bases of the 16S rRNA that are involved in tRNA selection in the A site and with the mRNA backbone. Located at the interface of the 30S and 50S subunits, it traverses the body of the 30S subunit contacting proteins on the other side and probably holding the rRNA structure together. The combined cluster of proteins S8, S12 and S17 appears to hold together the shoulder and platform of the 30S subunit. This chain is Small ribosomal subunit protein uS12, found in Desulforapulum autotrophicum (strain ATCC 43914 / DSM 3382 / VKM B-1955 / HRM2) (Desulfobacterium autotrophicum).